The primary structure comprises 167 residues: Claudin domain-containing protein 2 (167 aa).

4 helical membrane-spanning segments follow: residues 7 to 27, 59 to 79, 96 to 116, and 134 to 154; these read LQSG…LSTA, LAVT…GMVM, TSAF…GYTV, and WLAL…DMIM.

It belongs to the PMP-22/EMP/MP20 family.

It localises to the membrane. The sequence is that of Claudin domain-containing protein 2 (CLDND2) from Homo sapiens (Human).